A 146-amino-acid polypeptide reads, in one-letter code: Snaclec jerdonibitin subunit beta (146 aa).

A signal peptide spans 1–23 (MGRFIFVSFGLLVVFLSLSGTGA). Cystine bridges form between C25–C36, C53–C142, and C119–C134. A C-type lectin domain is found at 32 to 143 (YEGHCYRVFQ…CSKTYPFVCK (112 aa)).

This sequence belongs to the snaclec family. As to quaternary structure, heterodimer of subunits alpha and beta; disulfide-linked. Expressed by the venom gland.

Its subcellular location is the secreted. Its function is as follows. Snaclec that dose-dependently inhibits platelet aggregation induced by ristocetin or low-dose thrombin, but not by high-dose thrombin. Binds to GPIbalpha (GP1BA). In vivo, also dose-dependently induces thrombocytopenia of mice and platelet counts remains at very low level even after 18 hours intravenous injection. In Protobothrops jerdonii (Jerdon's pitviper), this protein is Snaclec jerdonibitin subunit beta.